Reading from the N-terminus, the 1479-residue chain is Type VII secretion system protein EssC (1479 aa).

Over 1-229 the chain is Cytoplasmic; sequence MHKLIIKYNK…RPPQPIQKNN (229 aa). The chain crosses the membrane as a helical span at residues 230-252; that stretch reads TVIWRSIIPPLVMIALTVVIFLV. Over 253–256 the chain is Extracellular; that stretch reads RPIG. Residues 257-279 traverse the membrane as a helical segment; that stretch reads IYILMMIGMSTVTIVFGITTYFS. Residues 280–1479 are Cytoplasmic-facing; it reads EKKKYNKDVE…QAYQKIRWFK (1200 aa). FtsK domains are found at residues 652 to 846 and 997 to 1183; these read DDIL…QDSN and QGPM…SEVS. ATP is bound by residues 672–679 and 1014–1021; these read GTTGSGKS and GSPGYGRT.

This sequence belongs to the EssC family. In terms of assembly, homooligomer. Interacts with EsaE.

The protein resides in the cell membrane. Functionally, component of the type VII secretion system (Ess). Required for the secretion of substrates including EsxA and EsxB. However, unable to support secretion of the substrate protein EsxC. The polypeptide is Type VII secretion system protein EssC (Staphylococcus aureus (strain Mu50 / ATCC 700699)).